We begin with the raw amino-acid sequence, 2353 residues long: Otogelin-like protein (2353 aa).

The first 31 residues, 1–31 (MNIVRKLNLMIPWSIFLLHVLLFSLQEYICA), serve as a signal peptide directing secretion. Positions 121 to 297 (GICKTWGQYH…VQTPDDTKCV (177 aa)) constitute a VWFD 1 domain. Intrachain disulfides connect Cys-123/Cys-257 and Cys-145/Cys-296. N-linked (GlcNAc...) asparagine glycosylation occurs at Asn-144. The TIL 1 domain occupies 390–443 (CDDSFVHRDCISCCPPTCTFEKQCLGSNLHCLDGCYCPDGLVMDNGTCISLENC). N-linked (GlcNAc...) asparagine glycosylation is found at Asn-434 and Asn-473. A VWFD 2 domain is found at 481–654 (VQCSVVGDSH…NAWRVSSTCF (174 aa)). 3 disulfides stabilise this stretch: Cys-483/Cys-618, Cys-505/Cys-653, and Cys-527/Cys-535. Residues 745 to 800 (CQKGMLYHHCSSFCLHSCISLSSPEQCSDDCAEGCNCPEGKFYEDTLNFCVPIFHC) form the TIL 2 domain. 2 N-linked (GlcNAc...) asparagine glycosylation sites follow: Asn-826 and Asn-876. Residues 946-1115 (AVCTIYGDRH…SWALGQCESP (170 aa)) form the VWFD 3 domain. 2 disulfides stabilise this stretch: Cys-948–Cys-1078 and Cys-992–Cys-999. Residues Asn-1289, Asn-1604, and Asn-2198 are each glycosylated (N-linked (GlcNAc...) asparagine). The region spanning 1534–1723 (CRCSMLSELS…SWEIEKSFEV (190 aa)) is the VWFD 4 domain. The cysteines at positions 1536 and 1683 are disulfide-linked. Cystine bridges form between Cys-2261–Cys-2317, Cys-2282–Cys-2331, Cys-2293–Cys-2348, and Cys-2297–Cys-2350. Positions 2261–2353 (CKREERICQK…EPIDCTCQWN (93 aa)) constitute a CTCK domain.

This sequence belongs to the otogelin family. In terms of tissue distribution, expressed at high levels in fetal inner ear and heart. Low levels in fetal skeletal muscle, kidney, spleen and colon. Not detected in fetal liver, lung, brain, nor in fetal stomach. In adult tissues, highest levels in brain, kidney, heart and retina. Relatively low levels in lung, spleen and duodenum. Not detected in adult skeletal muscle, liver, nor testis.

The protein localises to the secreted. In Homo sapiens (Human), this protein is Otogelin-like protein (OTOGL).